Reading from the N-terminus, the 553-residue chain is Glutamate--tRNA ligase (553 aa).

The short motif at 41–51 (PSPTGFQHIGG) is the 'HIGH' region element. A 'KMSKS' region motif is present at residues 293–297 (KLSKR). An ATP-binding site is contributed by Lys296.

The protein belongs to the class-I aminoacyl-tRNA synthetase family. Glutamate--tRNA ligase type 1 subfamily. In terms of assembly, monomer.

Its subcellular location is the cytoplasm. It catalyses the reaction tRNA(Glu) + L-glutamate + ATP = L-glutamyl-tRNA(Glu) + AMP + diphosphate. Catalyzes the attachment of glutamate to tRNA(Glu) in a two-step reaction: glutamate is first activated by ATP to form Glu-AMP and then transferred to the acceptor end of tRNA(Glu). This is Glutamate--tRNA ligase from Clostridium beijerinckii (strain ATCC 51743 / NCIMB 8052) (Clostridium acetobutylicum).